Reading from the N-terminus, the 327-residue chain is E3 ubiquitin ligase RNF121 (327 aa).

Ala2 is modified (N-acetylalanine). The next 5 helical transmembrane spans lie at 50-70, 79-99, 100-120, 148-168, and 172-192; these read MHAEMVLILIATLVVAQLLLV, SYNMVTLFQMWVVPLYFTVKL, HWWRFLVIWILFSAVTAFVTF, ATGIVGYMAVMFTLFGLNLLF, and PEDAMDFGISLLFYGLYYGVL. The segment at 226–276 adopts an RING-type; atypical zinc-finger fold; sequence CAVCGQQIFVDVSEEGIIENTYRLSCNHVFHEFCIRGWCIVGKKQTCPYCK. The helical transmembrane segment at 306–326 threads the bilayer; that stretch reads LVAWQPVIIGVVQGINYILGL.

This sequence belongs to the RNF121 family.

The protein localises to the endoplasmic reticulum membrane. The catalysed reaction is S-ubiquitinyl-[E2 ubiquitin-conjugating enzyme]-L-cysteine + [acceptor protein]-L-lysine = [E2 ubiquitin-conjugating enzyme]-L-cysteine + N(6)-ubiquitinyl-[acceptor protein]-L-lysine.. The protein operates within protein modification; protein ubiquitination. Its function is as follows. E3 ubiquitin ligase which accepts ubiquitin and transfers it to substrates thereby promoting their degradation by the endoplasmic reticulum-associated degradation (ERAD) pathway which is a pathway involved in ubiquitin-dependent degradation of misfolded endoplasmic reticulum proteins. May regulate the unfolded protein response to reduce endoplasmic reticulum stress. The polypeptide is E3 ubiquitin ligase RNF121 (RNF121) (Homo sapiens (Human)).